Here is a 101-residue protein sequence, read N- to C-terminus: Small ribosomal subunit protein bS6 (101 aa).

Belongs to the bacterial ribosomal protein bS6 family.

Functionally, binds together with bS18 to 16S ribosomal RNA. This is Small ribosomal subunit protein bS6 from Pseudarthrobacter chlorophenolicus (strain ATCC 700700 / DSM 12829 / CIP 107037 / JCM 12360 / KCTC 9906 / NCIMB 13794 / A6) (Arthrobacter chlorophenolicus).